We begin with the raw amino-acid sequence, 93 residues long: MTQLLTKTEIQEQAKVLSGWTVEESKLHITRTFKDFIQAIEFVNKLVEPAESAGHHPDIKISYNKVKITLTTHDAGGLTQADFDVAQTISQIK.

The protein belongs to the pterin-4-alpha-carbinolamine dehydratase family.

The enzyme catalyses (4aS,6R)-4a-hydroxy-L-erythro-5,6,7,8-tetrahydrobiopterin = (6R)-L-erythro-6,7-dihydrobiopterin + H2O. This is Putative pterin-4-alpha-carbinolamine dehydratase from Nostoc punctiforme (strain ATCC 29133 / PCC 73102).